The chain runs to 298 residues: MVDQEQFDISNVLIEALPYIKKFHNKKIMIKYGGHAMIDENAMSSTARDTVLLKYVGMQPIVVHGGGPEISRSMDKMGKEPKFIGGLRVTDKETMEIVKMVLVGKINTEIVSKLGFHGGKSVGISGKDSYLVEASRKGLTKVKHENGEVLEVDLGYVGKIDRVNKQLVDDLTNNNYIPVISPLGIDDDGNTLNLNADTVAGSIASEVNAEKLIVLTDVPGILTDPDDPESMIRRIRTDELKELIKDGIITGGMIPKVETCINAVENGVKTAHILDGRLNHSILLEIFTKHGIGTMVRE.

Substrate contacts are provided by residues 66 to 67 (GG), Arg88, and Asn193.

It belongs to the acetylglutamate kinase family. ArgB subfamily.

It localises to the cytoplasm. It carries out the reaction N-acetyl-L-glutamate + ATP = N-acetyl-L-glutamyl 5-phosphate + ADP. The protein operates within amino-acid biosynthesis; L-arginine biosynthesis; N(2)-acetyl-L-ornithine from L-glutamate: step 2/4. Catalyzes the ATP-dependent phosphorylation of N-acetyl-L-glutamate. This Methanosphaera stadtmanae (strain ATCC 43021 / DSM 3091 / JCM 11832 / MCB-3) protein is Acetylglutamate kinase.